A 214-amino-acid polypeptide reads, in one-letter code: Guanylate kinase (214 aa).

Residues 12 to 191 (GLMLVMSSPS…SIAAVQAILA (180 aa)) form the Guanylate kinase-like domain. Residue 19 to 26 (SPSGAGKT) participates in ATP binding.

It belongs to the guanylate kinase family.

The protein resides in the cytoplasm. The enzyme catalyses GMP + ATP = GDP + ADP. Essential for recycling GMP and indirectly, cGMP. The polypeptide is Guanylate kinase (Paramagnetospirillum magneticum (strain ATCC 700264 / AMB-1) (Magnetospirillum magneticum)).